Reading from the N-terminus, the 380-residue chain is S-adenosylmethionine:tRNA ribosyltransferase-isomerase (380 aa).

A compositionally biased stretch (basic and acidic residues) spans 1–15 (MHSKHPTDTARRCET). The segment at 1–24 (MHSKHPTDTARRCETGTDSSDTAA) is disordered.

This sequence belongs to the QueA family. Monomer.

It is found in the cytoplasm. The enzyme catalyses 7-aminomethyl-7-carbaguanosine(34) in tRNA + S-adenosyl-L-methionine = epoxyqueuosine(34) in tRNA + adenine + L-methionine + 2 H(+). The protein operates within tRNA modification; tRNA-queuosine biosynthesis. Functionally, transfers and isomerizes the ribose moiety from AdoMet to the 7-aminomethyl group of 7-deazaguanine (preQ1-tRNA) to give epoxyqueuosine (oQ-tRNA). The protein is S-adenosylmethionine:tRNA ribosyltransferase-isomerase of Oleidesulfovibrio alaskensis (strain ATCC BAA-1058 / DSM 17464 / G20) (Desulfovibrio alaskensis).